A 101-amino-acid polypeptide reads, in one-letter code: Translation initiation factor IF-1, chloroplastic (101 aa).

The segment covering 1 to 10 has biased composition (polar residues); the sequence is MNQLKKSFSP. Residues 1–35 form a disordered region; that stretch reads MNQLKKSFSPTEGKKDQNNLINDPQKNKQKKQKKL. The 76-residue stretch at 26-101 folds into the S1-like domain; it reads KNKQKKQKKL…TKGRITYRHR (76 aa).

This sequence belongs to the IF-1 family. As to quaternary structure, component of the 30S ribosomal translation pre-initiation complex which assembles on the 30S ribosome in the order IF-2 and IF-3, IF-1 and N-formylmethionyl-tRNA(fMet); mRNA recruitment can occur at any time during PIC assembly.

Its subcellular location is the plastid. The protein resides in the chloroplast. Functionally, one of the essential components for the initiation of protein synthesis. Stabilizes the binding of IF-2 and IF-3 on the 30S subunit to which N-formylmethionyl-tRNA(fMet) subsequently binds. Helps modulate mRNA selection, yielding the 30S pre-initiation complex (PIC). Upon addition of the 50S ribosomal subunit IF-1, IF-2 and IF-3 are released leaving the mature 70S translation initiation complex. The polypeptide is Translation initiation factor IF-1, chloroplastic (Tetradesmus obliquus (Green alga)).